Consider the following 305-residue polypeptide: UDP-3-O-acyl-N-acetylglucosamine deacetylase (305 aa).

Residues H79, H238, and D242 each coordinate Zn(2+). H265 serves as the catalytic Proton donor.

The protein belongs to the LpxC family. The cofactor is Zn(2+).

It catalyses the reaction a UDP-3-O-[(3R)-3-hydroxyacyl]-N-acetyl-alpha-D-glucosamine + H2O = a UDP-3-O-[(3R)-3-hydroxyacyl]-alpha-D-glucosamine + acetate. It participates in glycolipid biosynthesis; lipid IV(A) biosynthesis; lipid IV(A) from (3R)-3-hydroxytetradecanoyl-[acyl-carrier-protein] and UDP-N-acetyl-alpha-D-glucosamine: step 2/6. Functionally, catalyzes the hydrolysis of UDP-3-O-myristoyl-N-acetylglucosamine to form UDP-3-O-myristoylglucosamine and acetate, the committed step in lipid A biosynthesis. This chain is UDP-3-O-acyl-N-acetylglucosamine deacetylase, found in Vibrio vulnificus (strain CMCP6).